The sequence spans 149 residues: Large ribosomal subunit protein uL13 (149 aa).

This sequence belongs to the universal ribosomal protein uL13 family. As to quaternary structure, part of the 50S ribosomal subunit.

This protein is one of the early assembly proteins of the 50S ribosomal subunit, although it is not seen to bind rRNA by itself. It is important during the early stages of 50S assembly. The sequence is that of Large ribosomal subunit protein uL13 from Pelodictyon phaeoclathratiforme (strain DSM 5477 / BU-1).